The sequence spans 255 residues: Type III pantothenate kinase (255 aa).

Residue 6–13 (DIGNSNIV) participates in ATP binding. Substrate contacts are provided by residues Tyr-100 and 107–110 (GSDR). The Proton acceptor role is filled by Asp-109. Asp-129 serves as a coordination point for K(+). ATP is bound at residue Thr-132. Thr-184 lines the substrate pocket.

Belongs to the type III pantothenate kinase family. Homodimer. It depends on NH4(+) as a cofactor. Requires K(+) as cofactor.

The protein resides in the cytoplasm. It carries out the reaction (R)-pantothenate + ATP = (R)-4'-phosphopantothenate + ADP + H(+). The protein operates within cofactor biosynthesis; coenzyme A biosynthesis; CoA from (R)-pantothenate: step 1/5. Functionally, catalyzes the phosphorylation of pantothenate (Pan), the first step in CoA biosynthesis. The chain is Type III pantothenate kinase from Brevibacillus brevis (strain 47 / JCM 6285 / NBRC 100599).